The sequence spans 116 residues: Aspartate 1-decarboxylase (116 aa).

Ser-25 functions as the Schiff-base intermediate with substrate; via pyruvic acid in the catalytic mechanism. Ser-25 carries the pyruvic acid (Ser) modification. Thr-57 provides a ligand contact to substrate. Catalysis depends on Tyr-58, which acts as the Proton donor. 73 to 75 provides a ligand contact to substrate; that stretch reads GAA.

This sequence belongs to the PanD family. In terms of assembly, heterooctamer of four alpha and four beta subunits. Requires pyruvate as cofactor. Is synthesized initially as an inactive proenzyme, which is activated by self-cleavage at a specific serine bond to produce a beta-subunit with a hydroxyl group at its C-terminus and an alpha-subunit with a pyruvoyl group at its N-terminus.

The protein resides in the cytoplasm. The catalysed reaction is L-aspartate + H(+) = beta-alanine + CO2. Its pathway is cofactor biosynthesis; (R)-pantothenate biosynthesis; beta-alanine from L-aspartate: step 1/1. Its function is as follows. Catalyzes the pyruvoyl-dependent decarboxylation of aspartate to produce beta-alanine. The polypeptide is Aspartate 1-decarboxylase (Fervidobacterium nodosum (strain ATCC 35602 / DSM 5306 / Rt17-B1)).